Here is a 200-residue protein sequence, read N- to C-terminus: LexA repressor (200 aa).

Active-site for autocatalytic cleavage activity residues include Ser121 and Lys158.

This sequence belongs to the peptidase S24 family. In terms of assembly, homodimer.

The enzyme catalyses Hydrolysis of Ala-|-Gly bond in repressor LexA.. Functionally, binds a consensus sequence 5'-TGTTC-N(4)-GAACA-3'; some genes have a tandem consensus sequence and their binding is cooperative. Binds to the promoters of a number of genes, including lexA and splB. Represses a number of genes involved in the response to DNA damage (SOS response). The polypeptide is LexA repressor (Opitutus terrae (strain DSM 11246 / JCM 15787 / PB90-1)).